Consider the following 1162-residue polypeptide: Spike glycoprotein (1162 aa).

A signal peptide spans 1–18 (MLVTPLLLVTLLCALCSA). The Extracellular segment spans residues 19–1095 (ALYDSSSYVY…LKTYIKWPWY (1077 aa)). Residues Asn-51, Asn-77, Asn-103, Asn-144, Asn-163, Asn-178, Asn-212, Asn-237, Asn-247, Asn-264, Asn-271, Asn-276, Asn-306, Asn-425, Asn-447, Asn-513, Asn-530, Asn-579, Asn-591, Asn-669, Asn-676, and Asn-714 are each glycosylated (N-linked (GlcNAc...) asparagine; by host). The interval 769-874 (IPFATQLQAR…QVDRLITGRL (106 aa)) is heptad repeat 1 (HR1). Residues 822 to 866 (QDVVNKQSAILTETMASLNKNFGAISSVIQEIYLQLDAIQANAQV) adopt a coiled-coil conformation. Residues Asn-947, Asn-960, Asn-979, Asn-1014, Asn-1051, Asn-1058, and Asn-1074 are each glycosylated (N-linked (GlcNAc...) asparagine; by host). The heptad repeat 2 (HR2) stretch occupies residues 1024-1105 (NDDFDFDDEL…VWLAIAFATI (82 aa)). Positions 1055 to 1083 (PVLNITYDIDKIEEVIKGLNDSLIDLETL) form a coiled coil. The chain crosses the membrane as a helical span at residues 1096-1116 (VWLAIAFATIIFILILGWVFF). Residues 1117–1162 (MTGCCGCCCGCFGIIPLMSKCGKKSSYYTTFDNDVVTEQYRPKKSV) are Cytoplasmic-facing. A Di-lysine motif motif is present at residues 1159–1162 (KKSV).

This sequence belongs to the gammacoronaviruses spike protein family. Homotrimer; each monomer consists of a S1 and a S2 subunit. The resulting peplomers protrude from the virus surface as spikes. In terms of processing, specific enzymatic cleavages in vivo yield mature proteins. The precursor is processed into S1 and S2 by host cell furin or furin-like protease to yield the mature S1 and S2 proteins. The cleavage site between S1 and S2 requires the optimal sequence [KR]-X-[KR]-R. Additionally, a second cleavage leads to the release of a fusion peptide after viral attachment to host cell receptor.

The protein localises to the virion membrane. It is found in the host endoplasmic reticulum-Golgi intermediate compartment membrane. Attaches the virion to the host cell membrane by interacting with sialic acids, initiating the infection. Functionally, mediates fusion of the virion and cellular membranes by acting as a class I viral fusion protein. Under the current model, the protein has at least 3 conformational states: pre-fusion native state, pre-hairpin intermediate state, and post-fusion hairpin state. During viral and target cell membrane fusion, the coiled coil regions (heptad repeats) assume a trimer-of-hairpins structure, positioning the fusion peptide in close proximity to the C-terminal region of the ectodomain. The formation of this structure appears to drive apposition and subsequent fusion of viral and target cell membranes. Its function is as follows. Acts as a viral fusion peptide after S2 cleavage occurring upon virus endocytosis. In Avian infectious bronchitis virus (strain KB8523) (IBV), this protein is Spike glycoprotein.